The chain runs to 306 residues: Protein SEC13 homolog (306 aa).

6 WD repeats span residues 11 to 50 (QHRDAIHDAQLNIYGNRLATCGSDRLVKIFEVRPNGQSYP), 56 to 97 (GHNG…WQKT), 102 to 143 (THEA…QQWQ), 150 to 195 (CHDQ…NEWT), 202 to 245 (CHKD…TAEW), and 252 to 291 (QAPCALYHASFSPCGSFLSVSGDDNMITLWRENLQGQWIK).

The protein belongs to the WD repeat SEC13 family. Probably part of the GATOR complex.

Its subcellular location is the cytoplasmic vesicle. The protein localises to the COPII-coated vesicle membrane. It is found in the endoplasmic reticulum membrane. It localises to the nucleus. The protein resides in the nuclear pore complex. Its subcellular location is the lysosome membrane. In terms of biological role, functions as a component of the nuclear pore complex (NPC) and the COPII coat. As a component of the GATOR complex may function in the amino acid-sensing branch of the TORC1 signaling pathway. This Caenorhabditis briggsae protein is Protein SEC13 homolog.